The following is a 739-amino-acid chain: Polyribonucleotide nucleotidyltransferase (739 aa).

Mg(2+)-binding residues include D487 and D493. The region spanning 554–613 (PRIETMQIPTDKIRDVIGTGGKVIREIVEKTGAKINIEDTGVVKIASADGKAIKAAYNWI) is the KH domain. One can recognise an S1 motif domain in the interval 623-691 (GVIYDGTIVK…DRGKIRLSMK (69 aa)). A disordered region spans residues 694–739 (DQQTGEDITDKIKAQRDAERAERGDEPREPREGGRHRGERRREAGE). Residues 701–739 (ITDKIKAQRDAERAERGDEPREPREGGRHRGERRREAGE) are compositionally biased toward basic and acidic residues.

It belongs to the polyribonucleotide nucleotidyltransferase family. The cofactor is Mg(2+).

Its subcellular location is the cytoplasm. The catalysed reaction is RNA(n+1) + phosphate = RNA(n) + a ribonucleoside 5'-diphosphate. Functionally, involved in mRNA degradation. Catalyzes the phosphorolysis of single-stranded polyribonucleotides processively in the 3'- to 5'-direction. This chain is Polyribonucleotide nucleotidyltransferase, found in Methylobacterium radiotolerans (strain ATCC 27329 / DSM 1819 / JCM 2831 / NBRC 15690 / NCIMB 10815 / 0-1).